The sequence spans 500 residues: Archaeal-type glutamate synthase [NADPH] (500 aa).

4Fe-4S ferredoxin-type domains are found at residues 7–38 (SKFI…YDED) and 40–69 (DQIK…VRNN). Residues Cys-18, Cys-21, Cys-24, Cys-28, Cys-49, Cys-52, Cys-55, and Cys-59 each coordinate [4Fe-4S] cluster.

It belongs to the glutamate synthase family. The cofactor is FMN.

The enzyme catalyses 2 L-glutamate + NADP(+) = L-glutamine + 2-oxoglutarate + NADPH + H(+). The protein is Archaeal-type glutamate synthase [NADPH] of Dehalococcoides mccartyi (strain ATCC BAA-2266 / KCTC 15142 / 195) (Dehalococcoides ethenogenes (strain 195)).